A 276-amino-acid polypeptide reads, in one-letter code: UPF0328 protein ECU01_0090/ECU01_1520/ECU02_1550/ECU08_0020 (276 aa).

Residues 1-24 (MGIIDVQRSHLTATPSKERDAPAH) are disordered.

This sequence belongs to the UPF0328 family.

This is UPF0328 protein ECU01_0090/ECU01_1520/ECU02_1550/ECU08_0020 from Encephalitozoon cuniculi (strain GB-M1) (Microsporidian parasite).